The primary structure comprises 265 residues: MVKLTPELINQSMQYINPCRERELDLRGYKIPQIENLGATLDQFDTIDLSDNDLRKLDNLPHLPRLKCLLLNNNRILRISEGLEEAVPNLGSIILTGNNLQELSDLEPLVGFTKLETICLLINPVSTKPNYREYMAYKFPQLRLLDFRKIKQKDRQAAQEFFRTKQGKDVLKEISRKSKMSAAAAIAAEAGNGKGRGSEGGRLANPQDMQRIREAIKRASSLAEVERLSQILQSGQLPDKFQHEMEAVAQNGAGHNGSGAVAMEY.

LRR repeat units lie at residues 20-41 (RERE…GATL), 43-64 (QFDT…PHLP), 65-86 (RLKC…LEEA), and 89-110 (NLGS…EPLV). The LRRCT domain maps to 123–161 (NPVSTKPNYREYMAYKFPQLRLLDFRKIKQKDRQAAQEF).

The protein belongs to the U2 small nuclear ribonucleoprotein A family. In terms of assembly, interacts with the SMN complex.

It localises to the nucleus. In terms of biological role, involved in pre-mRNA splicing as component of the spliceosome. Associated with sn-RNP U2, where it contributes to the binding of stem loop IV of U2 snRNA. In the germ line, has a role in oogenesis, by regulating spermatogenesis and nurse cell nuclei chromatin decondensation and dispersal, probably by regulating the splicing of proteins necessary for germline differentiation such as the meiotic protein mei-P26. This is Probable U2 small nuclear ribonucleoprotein A' (U2A) from Drosophila melanogaster (Fruit fly).